The primary structure comprises 937 residues: Isoleucine--tRNA ligase (937 aa).

A 'HIGH' region motif is present at residues 58 to 68; sequence PYANGSIHIGH. Glutamate 561 is a binding site for L-isoleucyl-5'-AMP. Residues 602-606 carry the 'KMSKS' region motif; that stretch reads KMSKS. Residue lysine 605 participates in ATP binding. Positions 900, 903, 920, and 923 each coordinate Zn(2+).

This sequence belongs to the class-I aminoacyl-tRNA synthetase family. IleS type 1 subfamily. Monomer. Zn(2+) is required as a cofactor.

It localises to the cytoplasm. The catalysed reaction is tRNA(Ile) + L-isoleucine + ATP = L-isoleucyl-tRNA(Ile) + AMP + diphosphate. Catalyzes the attachment of isoleucine to tRNA(Ile). As IleRS can inadvertently accommodate and process structurally similar amino acids such as valine, to avoid such errors it has two additional distinct tRNA(Ile)-dependent editing activities. One activity is designated as 'pretransfer' editing and involves the hydrolysis of activated Val-AMP. The other activity is designated 'posttransfer' editing and involves deacylation of mischarged Val-tRNA(Ile). This is Isoleucine--tRNA ligase from Pectobacterium carotovorum subsp. carotovorum (strain PC1).